The sequence spans 196 residues: ATP-dependent Clp protease proteolytic subunit (196 aa).

Serine 101 serves as the catalytic Nucleophile. Histidine 126 is an active-site residue.

Belongs to the peptidase S14 family. In terms of assembly, component of the chloroplastic Clp protease core complex.

The protein resides in the plastid. The protein localises to the chloroplast stroma. It carries out the reaction Hydrolysis of proteins to small peptides in the presence of ATP and magnesium. alpha-casein is the usual test substrate. In the absence of ATP, only oligopeptides shorter than five residues are hydrolyzed (such as succinyl-Leu-Tyr-|-NHMec, and Leu-Tyr-Leu-|-Tyr-Trp, in which cleavage of the -Tyr-|-Leu- and -Tyr-|-Trp bonds also occurs).. Cleaves peptides in various proteins in a process that requires ATP hydrolysis. Has a chymotrypsin-like activity. Plays a major role in the degradation of misfolded proteins. The chain is ATP-dependent Clp protease proteolytic subunit from Citrus sinensis (Sweet orange).